Here is a 122-residue protein sequence, read N- to C-terminus: MARIAGVNIPTNKRVNIALQYIHGIGPKFAREIVTKVGIADDRRVNQLSDAEVLQIREAIDADYQVEGDLRREVSMNIKRLMDLGCYRGLRHRRSLPVRGQRTHTNARTRKGPAKAIAGKKK.

The interval 97–122 (PVRGQRTHTNARTRKGPAKAIAGKKK) is disordered.

Belongs to the universal ribosomal protein uS13 family. Part of the 30S ribosomal subunit. Forms a loose heterodimer with protein S19. Forms two bridges to the 50S subunit in the 70S ribosome.

Located at the top of the head of the 30S subunit, it contacts several helices of the 16S rRNA. In the 70S ribosome it contacts the 23S rRNA (bridge B1a) and protein L5 of the 50S subunit (bridge B1b), connecting the 2 subunits; these bridges are implicated in subunit movement. Contacts the tRNAs in the A and P-sites. The protein is Small ribosomal subunit protein uS13 of Brucella abortus (strain S19).